A 122-amino-acid chain; its full sequence is Large ribosomal subunit protein bL17 (122 aa).

This sequence belongs to the bacterial ribosomal protein bL17 family. Part of the 50S ribosomal subunit. Contacts protein L32.

The sequence is that of Large ribosomal subunit protein bL17 from Staphylococcus aureus (strain Mu3 / ATCC 700698).